Consider the following 794-residue polypeptide: PAN2-PAN3 deadenylation complex subunit PAN3 (794 aa).

The C3H1-type zinc-finger motif lies at 7–36; that stretch reads SAKDVLCKNILIYGYCKFQDKGCAFSHNKQ. 2 disordered regions span residues 40–97 and 187–226; these read PQQQ…TQSK and AQVG…QQQL. Composition is skewed to polar residues over residues 83-94 and 189-199; these read IQSNGMVNSQET and VGNNPGSTAPA. The segment covering 200–226 has biased composition (low complexity); that stretch reads NLQLQQKQPQQPQQPQQPQQHQQQQQL. The pseudokinase domain stretch occupies residues 372–668; sequence QTMQHLSLPD…MDQFILQYIS (297 aa). Residues arginine 425 and 494–501 contribute to the ATP site; that span reads DYYPNLTT. The stretch at 669–707 forms a coiled coil; that stretch reads SHFMTLMNKLQNSHDWVELQLSTELENARLFRLMTKINF. The segment at 708–794 is knob domain; it reads IISEMPTYDL…IDTQFRLLRG (87 aa).

It belongs to the protein kinase superfamily. PAN3 family. Homodimer. Forms a heterotrimer with a catalytic subunit PAN2 to form the poly(A)-nuclease (PAN) deadenylation complex. Interacts (via PAM-2 motif) with poly(A)-binding protein PAB1 (via PABC domain), conferring substrate specificity of the enzyme complex.

The protein resides in the cytoplasm. Its function is as follows. Regulatory subunit of the poly(A)-nuclease (PAN) deadenylation complex, one of two cytoplasmic mRNA deadenylases involved in mRNA turnover. PAN specifically shortens poly(A) tails of RNA and the activity is stimulated by poly(A)-binding protein PAB1. PAN deadenylation is followed by rapid degradation of the shortened mRNA tails by the CCR4-NOT complex. Deadenylated mRNAs are then degraded by two alternative mechanisms, namely exosome-mediated 3'-5' exonucleolytic degradation, or deadenylation-dependent mRNA decaping and subsequent 5'-3' exonucleolytic degradation by XRN1. May also be involved in post-transcriptional maturation of mRNA poly(A) tails. PAN3 acts as a positive regulator for PAN activity, recruiting the catalytic subunit PAN2 to mRNA via its interaction with RNA and with PAB1. This is PAN2-PAN3 deadenylation complex subunit PAN3 from Lodderomyces elongisporus (strain ATCC 11503 / CBS 2605 / JCM 1781 / NBRC 1676 / NRRL YB-4239) (Yeast).